The following is a 58-amino-acid chain: Single-pass membrane and coiled-coil domain-containing protein 4 homolog (58 aa).

Positions 1 to 31 form a coiled coil; that stretch reads MRQLKGKVKETRKQKKERKLDNLETQAKIRT. A helical membrane pass occupies residues 31-51; sequence TVVLPALGVLAVFLVLFVYLK.

Belongs to the SMCO4 family.

It is found in the membrane. The polypeptide is Single-pass membrane and coiled-coil domain-containing protein 4 homolog (Drosophila melanogaster (Fruit fly)).